A 345-amino-acid chain; its full sequence is uncharacterized protein (345 aa).

Residue Met-1 is a domain, TBDR plug. One can recognise a TBDR beta-barrel domain in the interval 1-345; it reads MDLGPIYNTR…EVILNTKIEF (345 aa). The short motif at 328 to 345 is the TonB C-terminal box element; it reads PVALGYAREVILNTKIEF.

The protein belongs to the TonB-dependent receptor family.

It localises to the cell outer membrane. This is an uncharacterized protein from Haemophilus influenzae (strain ATCC 51907 / DSM 11121 / KW20 / Rd).